We begin with the raw amino-acid sequence, 376 residues long: ATP synthase gamma chain, chloroplastic (376 aa).

The N-terminal 52 residues, 1–52 (MSCSNVTMLVSSKPSLPDASNLSFRSAFNPFQLPSQNSSSSCTPSRPTSIQC), are a transit peptide targeting the chloroplast. Residue Cys133 is part of the active site. Cys250 and Cys256 are oxidised to a cystine.

This sequence belongs to the ATPase gamma chain family. As to quaternary structure, F-type ATPases have 2 components, CF(1) - the catalytic core - and CF(0) - the membrane proton channel. CF(1) has five subunits: alpha(3), beta(3), gamma(1), delta(1), epsilon(1). CF(0) has four main subunits: a, b, b' and c.

Its subcellular location is the plastid. The protein localises to the chloroplast thylakoid membrane. In terms of biological role, produces ATP from ADP in the presence of a proton gradient across the membrane. The gamma chain is believed to be important in regulating ATPase activity and the flow of protons through the CF(0) complex. This Pisum sativum (Garden pea) protein is ATP synthase gamma chain, chloroplastic (ATPC).